Reading from the N-terminus, the 481-residue chain is uncharacterized protein (481 aa).

A run of 11 helical transmembrane segments spans residues 14–34, 46–66, 90–110, 134–154, 167–187, 218–238, 258–278, 303–323, 377–397, 411–431, and 446–466; these read LGFCSVVMLGINSIIGAGIFL, FAPMAYVLAGIFAGVVAIVFA, IGIYVGVTHAITASIAWGVLA, FSVKTLTFLGFIGVLLAINLF, TVGKAFALSAFIVGGLWIITT, FSSMALATIVALYAFTGFESI, IAIFSVGAIYLLTLTVAMLLG, IIVVGALISMFGINVAASFGA, LAVIARFVQFIIVPIALIALA, AFTDKVLPLVAIVVSVGLAVS, and YFSIALIVITFIVVPAMAYLH.

The protein belongs to the amino acid-polyamine-organocation (APC) superfamily.

The protein resides in the cell membrane. In terms of biological role, probable amino-acid or metabolite transport protein. This is an uncharacterized protein from Mycobacterium tuberculosis (strain CDC 1551 / Oshkosh).